Reading from the N-terminus, the 488-residue chain is Ribulose bisphosphate carboxylase large chain (488 aa).

The substrate site is built by N128 and T178. Residue K180 is the Proton acceptor of the active site. K182 is a binding site for substrate. Mg(2+) contacts are provided by K206, D208, and E209. K206 is modified (N6-carboxylysine). Catalysis depends on H298, which acts as the Proton acceptor. Positions 299, 331, and 383 each coordinate substrate.

The protein belongs to the RuBisCO large chain family. Type I subfamily. As to quaternary structure, heterohexadecamer of 8 large chains and 8 small chains. Mg(2+) serves as cofactor.

The catalysed reaction is 2 (2R)-3-phosphoglycerate + 2 H(+) = D-ribulose 1,5-bisphosphate + CO2 + H2O. It carries out the reaction D-ribulose 1,5-bisphosphate + O2 = 2-phosphoglycolate + (2R)-3-phosphoglycerate + 2 H(+). In terms of biological role, ruBisCO catalyzes two reactions: the carboxylation of D-ribulose 1,5-bisphosphate, the primary event in carbon dioxide fixation, as well as the oxidative fragmentation of the pentose substrate. Both reactions occur simultaneously and in competition at the same active site. The protein is Ribulose bisphosphate carboxylase large chain of Xanthobacter flavus.